We begin with the raw amino-acid sequence, 460 residues long: MVLDDLGSSLRGTLDTLRGKSRISEEDVDKVVKEIQRSLLQADVDVDLVMDLSESITERSLEEEPPGGTSARDHVLRIVYEELVGLVGDSTPIPLEEQTIMLAGLQGSGKTTTAAKMAWWFSKKGLRPAIVQTDTFRPGAYEQAAEMADRAEVDFYGEPDSDDPVQIARDGLAATADADVHIVDTAGRHALEDDLIAEIEEIEGVVEPDRSLLVLDAAIGQGAKQQARQFDASIGIDGVAITKLDGTAKGGGSLTAVNETDSTIAFLGSGETVQDIERFEPDSFISRLLGMGDLKQLTERVERAMEETQDDDEDWDPEDLMKGEFTLHDMRKQMQAMDNMGPLDQVMDMIPGMGGGLMDELPDDAMDVTQERMRGFEVIMDSMTEAEMADPRSVGASQIRRIARGSGQPEDRVRELLDQHKMMAQTMQQFQGMGDGDMQRMMSKMQQQGGGGGGGFGGMF.

GTP contacts are provided by residues 104 to 111 (GLQGSGKT), 184 to 188 (DTAGR), and 242 to 245 (TKLD).

The protein belongs to the GTP-binding SRP family. SRP54 subfamily. As to quaternary structure, part of the signal recognition particle protein translocation system, which is composed of SRP and FtsY. Archaeal SRP consists of a 7S RNA molecule of 300 nucleotides and two protein subunits: SRP54 and SRP19.

Its subcellular location is the cytoplasm. The catalysed reaction is GTP + H2O = GDP + phosphate + H(+). Its function is as follows. Involved in targeting and insertion of nascent membrane proteins into the cytoplasmic membrane. Binds to the hydrophobic signal sequence of the ribosome-nascent chain (RNC) as it emerges from the ribosomes. The SRP-RNC complex is then targeted to the cytoplasmic membrane where it interacts with the SRP receptor FtsY. This chain is Signal recognition particle 54 kDa protein, found in Halobacterium salinarum (strain ATCC 29341 / DSM 671 / R1).